Here is a 375-residue protein sequence, read N- to C-terminus: MQKLQIFVYIYLFVLIVAGPVDLNENSEQKEYVEKEGLCNACLWRQNNKSSRLEAIKIQILSKLRLETAPNISKDAIRQLLPKAPPLRELIDQYDVQRDDSSDGSLEDDDYHATTETVITMPTESDLLAEVEEKPKCCFFKFSSKIQYNKVVKAQLWIYLRPVKTPTTVFVQILRLIKPMKDGTRYTGIRSLKLDMNPGTGIWQSIDVKTVLQNWLKQPESNLGIEIKALDENGHNLAVTFPEPGEEGLNPFLEVKVTDTPKRSRRDFGLDCDEHSTESRCCRYPLTVDFEAFGWDWIIAPKRYKANYCSGECEFVFLQKYPHTHLVHQANPRGSAGPCCTPTKMSPINMLYFNGKEQIIYGKIPGMVVDRCGCS.

Residues Met1–Ala18 form the signal peptide. The propeptide occupies Gly19–Arg266. 2 N-linked (GlcNAc...) asparagine glycosylation sites follow: Asn48 and Asn71. 4 disulfides stabilise this stretch: Cys272–Cys282, Cys281–Cys340, Cys309–Cys372, and Cys313–Cys374.

The protein belongs to the TGF-beta family. Homodimer; disulfide-linked. Interacts with WFIKKN2, leading to inhibit its activity. Interacts with FSTL3. Post-translationally, synthesized as large precursor molecule that undergoes proteolytic cleavage to generate an N-terminal propeptide and a disulfide linked C-terminal dimer, which is the biologically active molecule. The circulating form consists of a latent complex of the C-terminal dimer and other proteins, including its propeptide, which maintain the C-terminal dimer in a latent, inactive state. Ligand activation requires additional cleavage of the prodomain by a tolloid-like metalloproteinase.

Its subcellular location is the secreted. Acts specifically as a negative regulator of skeletal muscle growth. This chain is Growth/differentiation factor 8 (MSTN), found in Aepyceros melampus (Impala).